A 390-amino-acid chain; its full sequence is Probable purine permease 7 (390 aa).

The next 10 membrane-spanning stretches (helical) occupy residues 42 to 62, 74 to 94, 110 to 130, 131 to 151, 169 to 189, 205 to 225, 244 to 264, 286 to 306, 312 to 332, and 341 to 361; these read WLRVSIYVIFVLFCQPLATIL, TYVVTLLQLIGFPVLVLFRFF, SPSFTTLASVYLCTGLLVSAY, AYLSAVGLLYLPVSTFSLILA, FTPLIVSSLLLLTVSSALLVV, VIGFICTIGASAGIGLLLSLI, LAIYQSLVASCVVLIGLFASG, TLASAAISWQVYTLGLVGLIF, FSNSITAVGLPIVPVAAVIVF, and IFSIILAICGFLSFVYQHYLD.

The protein belongs to the purine permeases (TC 2.A.7.14) family.

The protein localises to the membrane. The polypeptide is Probable purine permease 7 (PUP7) (Arabidopsis thaliana (Mouse-ear cress)).